A 146-amino-acid chain; its full sequence is Transcription antitermination protein NusB (146 aa).

Belongs to the NusB family.

Functionally, involved in transcription antitermination. Required for transcription of ribosomal RNA (rRNA) genes. Binds specifically to the boxA antiterminator sequence of the ribosomal RNA (rrn) operons. The protein is Transcription antitermination protein NusB of Solibacter usitatus (strain Ellin6076).